Here is a 436-residue protein sequence, read N- to C-terminus: UPF0597 protein YhaM (436 aa).

It belongs to the UPF0597 family.

The polypeptide is UPF0597 protein YhaM (Salmonella heidelberg (strain SL476)).